Here is a 159-residue protein sequence, read N- to C-terminus: Phosphopantetheine adenylyltransferase (159 aa).

Thr10 lines the substrate pocket. Residues 10 to 11 (TF) and His18 contribute to the ATP site. Substrate-binding residues include Lys42, Met74, and Arg88. Residues 89 to 91 (GLR), Glu99, and 124 to 130 (WSFISSS) contribute to the ATP site.

The protein belongs to the bacterial CoaD family. Homohexamer. Requires Mg(2+) as cofactor.

It localises to the cytoplasm. The enzyme catalyses (R)-4'-phosphopantetheine + ATP + H(+) = 3'-dephospho-CoA + diphosphate. The protein operates within cofactor biosynthesis; coenzyme A biosynthesis; CoA from (R)-pantothenate: step 4/5. In terms of biological role, reversibly transfers an adenylyl group from ATP to 4'-phosphopantetheine, yielding dephospho-CoA (dPCoA) and pyrophosphate. The protein is Phosphopantetheine adenylyltransferase of Klebsiella pneumoniae (strain 342).